Consider the following 553-residue polypeptide: Hydroxylamine reductase (553 aa).

Residues Cys3, Cys6, Cys15, and Cys21 each coordinate [4Fe-4S] cluster. Hybrid [4Fe-2O-2S] cluster contacts are provided by His244, Glu268, Cys312, Cys406, Cys434, Cys459, Glu494, and Lys496. A Cysteine persulfide modification is found at Cys406.

The protein belongs to the HCP family. Monomer. [4Fe-4S] cluster serves as cofactor. Requires hybrid [4Fe-2O-2S] cluster as cofactor.

It is found in the cytoplasm. The catalysed reaction is A + NH4(+) + H2O = hydroxylamine + AH2 + H(+). Its function is as follows. Catalyzes the reduction of hydroxylamine to form NH(3) and H(2)O. This Nitratidesulfovibrio vulgaris (strain ATCC 29579 / DSM 644 / CCUG 34227 / NCIMB 8303 / VKM B-1760 / Hildenborough) (Desulfovibrio vulgaris) protein is Hydroxylamine reductase.